The sequence spans 156 residues: SsrA-binding protein (156 aa).

Belongs to the SmpB family.

The protein localises to the cytoplasm. Its function is as follows. Required for rescue of stalled ribosomes mediated by trans-translation. Binds to transfer-messenger RNA (tmRNA), required for stable association of tmRNA with ribosomes. tmRNA and SmpB together mimic tRNA shape, replacing the anticodon stem-loop with SmpB. tmRNA is encoded by the ssrA gene; the 2 termini fold to resemble tRNA(Ala) and it encodes a 'tag peptide', a short internal open reading frame. During trans-translation Ala-aminoacylated tmRNA acts like a tRNA, entering the A-site of stalled ribosomes, displacing the stalled mRNA. The ribosome then switches to translate the ORF on the tmRNA; the nascent peptide is terminated with the 'tag peptide' encoded by the tmRNA and targeted for degradation. The ribosome is freed to recommence translation, which seems to be the essential function of trans-translation. The sequence is that of SsrA-binding protein from Desulfitobacterium hafniense (strain DSM 10664 / DCB-2).